The primary structure comprises 1319 residues: DNA (cytosine-5)-methyltransferase CMT2 (1319 aa).

A compositionally biased stretch (pro residues) spans 1-15 (METPPPDPVSPPPPA). Disordered regions lie at residues 1–34 (METPPPDPVSPPPPAADEGSPGGDDGAEDAGGFS), 142–189 (ALDS…VASS), 265–302 (SAASSMPLNQNGDSSRASKRRVADSRKSRSSEGSKLPA), and 442–468 (KSRVVSKTPQGRGRRSPQPPKTQRART). Polar residues predominate over residues 266–279 (AASSMPLNQNGDSS). Positions 285 to 296 (RVADSRKSRSSE) are enriched in basic and acidic residues. The BAH domain maps to 602–719 (YTFCIGECAF…IDYSTFSTIE (118 aa)). The 539-residue stretch at 758–1296 (LSLLDLYCGC…YALAMAYLKK (539 aa)) folds into the SAM-dependent MTase C5-type domain. One can recognise a Chromo domain in the interval 863-928 (FEVWKLVDIC…EGHRQRILPR (66 aa)). The active site involves C941.

Its subcellular location is the nucleus. The enzyme catalyses a 2'-deoxycytidine in DNA + S-adenosyl-L-methionine = a 5-methyl-2'-deoxycytidine in DNA + S-adenosyl-L-homocysteine + H(+). In terms of biological role, involved in CpXpG DNA methylation. The protein is DNA (cytosine-5)-methyltransferase CMT2 of Oryza sativa subsp. japonica (Rice).